A 227-amino-acid chain; its full sequence is Phosphoribosylformylglycinamidine synthase subunit PurQ (227 aa).

The Glutamine amidotransferase type-1 domain maps to 2-226 (KFAVIQFPGS…VKAWKEEQVN (225 aa)). Cysteine 86 acts as the Nucleophile in catalysis. Active-site residues include histidine 195 and glutamate 197.

In terms of assembly, part of the FGAM synthase complex composed of 1 PurL, 1 PurQ and 2 PurS subunits.

It is found in the cytoplasm. It carries out the reaction N(2)-formyl-N(1)-(5-phospho-beta-D-ribosyl)glycinamide + L-glutamine + ATP + H2O = 2-formamido-N(1)-(5-O-phospho-beta-D-ribosyl)acetamidine + L-glutamate + ADP + phosphate + H(+). It catalyses the reaction L-glutamine + H2O = L-glutamate + NH4(+). The protein operates within purine metabolism; IMP biosynthesis via de novo pathway; 5-amino-1-(5-phospho-D-ribosyl)imidazole from N(2)-formyl-N(1)-(5-phospho-D-ribosyl)glycinamide: step 1/2. Its function is as follows. Part of the phosphoribosylformylglycinamidine synthase complex involved in the purines biosynthetic pathway. Catalyzes the ATP-dependent conversion of formylglycinamide ribonucleotide (FGAR) and glutamine to yield formylglycinamidine ribonucleotide (FGAM) and glutamate. The FGAM synthase complex is composed of three subunits. PurQ produces an ammonia molecule by converting glutamine to glutamate. PurL transfers the ammonia molecule to FGAR to form FGAM in an ATP-dependent manner. PurS interacts with PurQ and PurL and is thought to assist in the transfer of the ammonia molecule from PurQ to PurL. The polypeptide is Phosphoribosylformylglycinamidine synthase subunit PurQ (Listeria monocytogenes serotype 4a (strain HCC23)).